A 243-amino-acid polypeptide reads, in one-letter code: Sec-independent protein translocase protein TATB, chloroplastic (243 aa).

A chloroplast-targeting transit peptide spans 1–67 (MTPTANLLLP…SRTRRRNVIC (67 aa)). Residues 68 to 69 (AS) lie on the Lumenal side of the membrane. A helical transmembrane segment spans residues 70-90 (LFGVGAPEALVIGVVALLVFG). The Stromal portion of the chain corresponds to 91 to 243 (PKGLAEVARN…NKSQKAEGER (153 aa)). Disordered regions lie at residues 129-165 (EIGI…PAPY) and 178-243 (IAAS…EGER). Composition is skewed to polar residues over residues 135 to 152 (VSQS…NQQP) and 187 to 204 (NPQQ…PTTP).

Belongs to the TatB family. In thylakoid membranes, TATC and TATB form a large receptor complex, containing about eight TATC-TATB pairs, which binds the precursor protein. Twin arginine signal peptide promotes pH-triggered docking of TATA oligomers to TATC-TATB receptor complex, inducing a conformational switch of TATA that results in activation of the translocase. TATA dissociates from TATC-TATB upon completion of translocation.

It localises to the plastid. Its subcellular location is the chloroplast thylakoid membrane. In terms of biological role, part of the twin-arginine translocation (Tat) system that transports large folded proteins containing a characteristic twin-arginine motif in their signal peptide across the thylakoid membrane. Involved in delta pH-dependent protein transport required for chloroplast development, especially thylakoid membrane formation. TATC and TATB mediate precursor recognition, whereas TATA facilitates translocation. The polypeptide is Sec-independent protein translocase protein TATB, chloroplastic (Zea mays (Maize)).